The sequence spans 404 residues: MSDSKEPRLQQLDLLEEEQLGGVGFRQTRGYKSLAGCLGHGPLVLQLLSFTLLAGLLVQVSKVPSSLSQGQSKQDAIYQNLTQLKVAVSELSEKSKQQEIYQELTRLKAAVGELPEKSKQQEIYEELTRLKAAVGELPEKSKLQEIYQELTRLKAAVGELPEKSKMQEIYQELSRLKAAVGDLPEKSKQQEIYQELSRLKAAVGDLPEKSKQQEIYQKLTQLKAAVDGLPDRSKQQEIYQELIQLKAAVERLCHPCPWEWTFFQGNCYFMSNSQRNWHDSITACQEVGAQLVVIKSAEEQNFLQLQSSRSNRFTWMGLSDLNHEGTWQWVDGSPLLPSFKQYWNKGEPNNIGEEDCAEFSGNGWNDDKCNLAKFWICKKSAASCSGDEERLLSPAPTTPNPPPA.

Topologically, residues 1-37 are cytoplasmic; sequence MSDSKEPRLQQLDLLEEEQLGGVGFRQTRGYKSLAGC. 3 short sequence motifs (endocytosis signal) span residues 14 to 15, 16 to 18, and 31 to 34; these read LL, EEE, and YKSL. The chain crosses the membrane as a helical; Signal-anchor for type II membrane protein span at residues 38–58; that stretch reads LGHGPLVLQLLSFTLLAGLLV. Topologically, residues 59-404 are extracellular; it reads QVSKVPSSLS…APTTPNPPPA (346 aa). N80 carries an N-linked (GlcNAc...) asparagine glycan. Tandem repeats lie at residues 96–118, 119–141, 142–164, 165–187, 188–210, 211–233, and 234–257. Residues 96 to 257 form a 7 X approximate tandem repeats region; the sequence is KQQEIYQELT…AVERLCHPCP (162 aa). Intrachain disulfides connect C256-C267, C284-C377, and C356-C369. The 116-residue stretch at 263-378 folds into the C-type lectin domain; that stretch reads FQGNCYFMSN…CNLAKFWICK (116 aa). Residues E347, N349, I351, E354, N365, and D366 each contribute to the Ca(2+) site. The tract at residues 382 to 404 is disordered; it reads ASCSGDEERLLSPAPTTPNPPPA.

In terms of assembly, homotetramer. Interacts with C1QBP; the interaction is indicative for a C1q:C1QBP:CD209 signaling complex. Interacts with ICAM2 and ICAM3 by binding to mannose-like carbohydrates. Interacts (via C-type lectin domain) with CEACAM1 (via Lewis X moieties); this interaction is regulated by the glycosylation pattern of CEACAM1 on cell types and regulates contact between dendritic cells and neutrophils.

It is found in the membrane. Pathogen-recognition receptor expressed on the surface of immature dendritic cells (DCs) and involved in initiation of primary immune response. Thought to mediate the endocytosis of pathogens which are subsequently degraded in lysosomal compartments. The receptor returns to the cell membrane surface and the pathogen-derived antigens are presented to resting T-cells via MHC class II proteins to initiate the adaptive immune response. Probably recognizes in a calcium-dependent manner high mannose N-linked oligosaccharides in a variety of pathogen antigens. Its function is as follows. On DCs it is a high affinity receptor for ICAM2 and ICAM3 by binding to mannose-like carbohydrates. May act as a DC rolling receptor that mediates transendothelial migration of DC presursors from blood to tissues by binding endothelial ICAM2. Seems to regulate DC-induced T-cell proliferation by binding to ICAM3 on T-cells in the immunological synapse formed between DC and T-cells. This Macaca mulatta (Rhesus macaque) protein is CD209 antigen (CD209).